We begin with the raw amino-acid sequence, 312 residues long: Methionyl-tRNA formyltransferase (312 aa).

(6S)-5,6,7,8-tetrahydrofolate is bound at residue 112 to 115; it reads SLLP.

This sequence belongs to the Fmt family.

It carries out the reaction L-methionyl-tRNA(fMet) + (6R)-10-formyltetrahydrofolate = N-formyl-L-methionyl-tRNA(fMet) + (6S)-5,6,7,8-tetrahydrofolate + H(+). Its function is as follows. Attaches a formyl group to the free amino group of methionyl-tRNA(fMet). The formyl group appears to play a dual role in the initiator identity of N-formylmethionyl-tRNA by promoting its recognition by IF2 and preventing the misappropriation of this tRNA by the elongation apparatus. This Dehalococcoides mccartyi (strain ATCC BAA-2266 / KCTC 15142 / 195) (Dehalococcoides ethenogenes (strain 195)) protein is Methionyl-tRNA formyltransferase.